A 274-amino-acid chain; its full sequence is tRNA-cytidine(32) 2-sulfurtransferase (274 aa).

Positions 40-45 (SGGKDS) match the PP-loop motif motif. Residues Cys115, Cys118, and Cys206 each coordinate [4Fe-4S] cluster.

It belongs to the TtcA family. In terms of assembly, homodimer. The cofactor is Mg(2+). [4Fe-4S] cluster is required as a cofactor.

It localises to the cytoplasm. It catalyses the reaction cytidine(32) in tRNA + S-sulfanyl-L-cysteinyl-[cysteine desulfurase] + AH2 + ATP = 2-thiocytidine(32) in tRNA + L-cysteinyl-[cysteine desulfurase] + A + AMP + diphosphate + H(+). It participates in tRNA modification. Functionally, catalyzes the ATP-dependent 2-thiolation of cytidine in position 32 of tRNA, to form 2-thiocytidine (s(2)C32). The sulfur atoms are provided by the cysteine/cysteine desulfurase (IscS) system. This is tRNA-cytidine(32) 2-sulfurtransferase from Azotobacter vinelandii (strain DJ / ATCC BAA-1303).